Here is a 111-residue protein sequence, read N- to C-terminus: Distal membrane-arm assembly complex protein 1 (111 aa).

Polar residues predominate over residues 1-11 (MGSSFSGSTEF). Positions 1–40 (MGSSFSGSTEFSAPAPPTVSTAVPANPPAKSAVPASPARD) are disordered. The span at 18–38 (TVSTAVPANPPAKSAVPASPA) shows a compositional bias: low complexity. 2 consecutive transmembrane segments (helical) span residues 51 to 68 (VLSG…YLVA) and 81 to 101 (GTVL…VVLV).

As to quaternary structure, interacts with incompletely assembled mitochondrial NADH:ubiquinone oxidoreductase complex (complex I).

The protein resides in the mitochondrion inner membrane. Functionally, required for the assembly of the mitochondrial NADH:ubiquinone oxidoreductase complex (complex I). Involved in the assembly of the distal region of complex I. The protein is Distal membrane-arm assembly complex protein 1 of Mus musculus (Mouse).